We begin with the raw amino-acid sequence, 458 residues long: Chromosomal replication initiator protein DnaA (458 aa).

Positions 1 to 79 (MSLAIWQECL…ENPNHSVKIR (79 aa)) are domain I, interacts with DnaA modulators. A domain II region spans residues 79-120 (RLMVGNVSSVEKKPAKQIPTQAPLTNQPWEGESKAHRVPHKS). The disordered stretch occupies residues 92–114 (PAKQIPTQAPLTNQPWEGESKAH). The span at 96–106 (IPTQAPLTNQP) shows a compositional bias: polar residues. The interval 121-338 (NLIKKYTFDN…GAIANISAKA (218 aa)) is domain III, AAA+ region. ATP is bound by residues glycine 165, glycine 167, lysine 168, and threonine 169. Positions 339–458 (QFTGQGITIS…YKILIRTLSM (120 aa)) are domain IV, binds dsDNA.

The protein belongs to the DnaA family. Oligomerizes as a right-handed, spiral filament on DNA at oriC.

The protein resides in the cytoplasm. Its function is as follows. Plays an essential role in the initiation and regulation of chromosomal replication. ATP-DnaA binds to the origin of replication (oriC) to initiate formation of the DNA replication initiation complex once per cell cycle. Binds the DnaA box (a 9 base pair repeat at the origin) and separates the double-stranded (ds)DNA. Forms a right-handed helical filament on oriC DNA; dsDNA binds to the exterior of the filament while single-stranded (ss)DNA is stabiized in the filament's interior. The ATP-DnaA-oriC complex binds and stabilizes one strand of the AT-rich DNA unwinding element (DUE), permitting loading of DNA polymerase. After initiation quickly degrades to an ADP-DnaA complex that is not apt for DNA replication. Binds acidic phospholipids. The chain is Chromosomal replication initiator protein DnaA from Psychromonas ingrahamii (strain DSM 17664 / CCUG 51855 / 37).